The chain runs to 246 residues: MLPQPQIWLCPTDRPLIPGYQALLSSEEMARGERYQRPQDKQRFLTMRLALRILLARQLDCLPQQLQFTYGPQGKPELVDRERRSPWFNVAHSGNYGLIGLSTEGEIGVDLQIMLPKPHYLKLAKRFFAPQEVQQLESLEGEKRTKLFYQLWTAKEAFLKATGKGISGGLNQVIPDENLAKYQYLPDSGDTNHWRLSSQPLLADQGSNDNYWMAIAWCTNEVNQVESNYLPNIQPFQWPRNLDSLP.

Residues Asp-110 and Glu-156 each contribute to the Mg(2+) site.

The protein belongs to the P-Pant transferase superfamily. Gsp/Sfp/HetI/AcpT family. Mg(2+) serves as cofactor.

Probably transfers the 4'-phosphopantetheine moiety from coenzyme A (CoA) to a serine residue of a carrier protein domain. The protein is Putative 4'-phosphopantetheinyl transferase slr0495 of Synechocystis sp. (strain ATCC 27184 / PCC 6803 / Kazusa).